The chain runs to 187 residues: uncharacterized protein (187 aa).

The HTH tetR-type domain maps to 6-66 (TDLAEQIFSA…QFAHRVFSMF (61 aa)). A DNA-binding region (H-T-H motif) is located at residues 29-48 (SMLKLAKEANVAAGTIYLYF).

This is an uncharacterized protein from Haemophilus influenzae (strain ATCC 51907 / DSM 11121 / KW20 / Rd).